The primary structure comprises 353 residues: Protein RecA (353 aa).

68–75 is an ATP binding site; sequence GPESSGKT.

Belongs to the RecA family.

Its subcellular location is the cytoplasm. Can catalyze the hydrolysis of ATP in the presence of single-stranded DNA, the ATP-dependent uptake of single-stranded DNA by duplex DNA, and the ATP-dependent hybridization of homologous single-stranded DNAs. It interacts with LexA causing its activation and leading to its autocatalytic cleavage. In Roseiflexus sp. (strain RS-1), this protein is Protein RecA.